The sequence spans 227 residues: Cytochrome c oxidase subunit 2 (227 aa).

Residues 1 to 14 (MAYTFQLGLQDATS) are Mitochondrial intermembrane-facing. The helical transmembrane segment at 15 to 45 (PIMEELTNFHDHTLMIVFLISSLVLYVISLM) threads the bilayer. Topologically, residues 46-59 (LTTKLTHTNTMDAQ) are mitochondrial matrix. The chain crosses the membrane as a helical span at residues 60–87 (EVETIWTILPAVILILIALPSLRILYMM). Topologically, residues 88-227 (DEINNPVLTV…HFENWSASMI (140 aa)) are mitochondrial intermembrane. Cu cation contacts are provided by His161, Cys196, Glu198, Cys200, His204, and Met207. Mg(2+) is bound at residue Glu198.

It belongs to the cytochrome c oxidase subunit 2 family. In terms of assembly, component of the cytochrome c oxidase (complex IV, CIV), a multisubunit enzyme composed of 14 subunits. The complex is composed of a catalytic core of 3 subunits MT-CO1, MT-CO2 and MT-CO3, encoded in the mitochondrial DNA, and 11 supernumerary subunits COX4I, COX5A, COX5B, COX6A, COX6B, COX6C, COX7A, COX7B, COX7C, COX8 and NDUFA4, which are encoded in the nuclear genome. The complex exists as a monomer or a dimer and forms supercomplexes (SCs) in the inner mitochondrial membrane with NADH-ubiquinone oxidoreductase (complex I, CI) and ubiquinol-cytochrome c oxidoreductase (cytochrome b-c1 complex, complex III, CIII), resulting in different assemblies (supercomplex SCI(1)III(2)IV(1) and megacomplex MCI(2)III(2)IV(2)). Found in a complex with TMEM177, COA6, COX18, COX20, SCO1 and SCO2. Interacts with TMEM177 in a COX20-dependent manner. Interacts with COX20. Interacts with COX16. It depends on Cu cation as a cofactor.

The protein localises to the mitochondrion inner membrane. It catalyses the reaction 4 Fe(II)-[cytochrome c] + O2 + 8 H(+)(in) = 4 Fe(III)-[cytochrome c] + 2 H2O + 4 H(+)(out). Its function is as follows. Component of the cytochrome c oxidase, the last enzyme in the mitochondrial electron transport chain which drives oxidative phosphorylation. The respiratory chain contains 3 multisubunit complexes succinate dehydrogenase (complex II, CII), ubiquinol-cytochrome c oxidoreductase (cytochrome b-c1 complex, complex III, CIII) and cytochrome c oxidase (complex IV, CIV), that cooperate to transfer electrons derived from NADH and succinate to molecular oxygen, creating an electrochemical gradient over the inner membrane that drives transmembrane transport and the ATP synthase. Cytochrome c oxidase is the component of the respiratory chain that catalyzes the reduction of oxygen to water. Electrons originating from reduced cytochrome c in the intermembrane space (IMS) are transferred via the dinuclear copper A center (CU(A)) of subunit 2 and heme A of subunit 1 to the active site in subunit 1, a binuclear center (BNC) formed by heme A3 and copper B (CU(B)). The BNC reduces molecular oxygen to 2 water molecules using 4 electrons from cytochrome c in the IMS and 4 protons from the mitochondrial matrix. This chain is Cytochrome c oxidase subunit 2 (MT-CO2), found in Niviventer culturatus (Oldfield white-bellied rat).